Consider the following 212-residue polypeptide: Guanylate kinase (212 aa).

One can recognise a Guanylate kinase-like domain in the interval 7–187; it reads GLLIVLSGPS…AADRIIAIIR (181 aa). Residue 14 to 21 participates in ATP binding; it reads GPSGVGKA.

The protein belongs to the guanylate kinase family.

The protein localises to the cytoplasm. The enzyme catalyses GMP + ATP = GDP + ADP. Its function is as follows. Essential for recycling GMP and indirectly, cGMP. The sequence is that of Guanylate kinase from Onion yellows phytoplasma (strain OY-M).